Here is a 226-residue protein sequence, read N- to C-terminus: PKHD-type hydroxylase mma_3620 (226 aa).

In terms of domain architecture, Fe2OG dioxygenase spans 78-178 (RYMPPLFNRY…RVCSFFWLQS (101 aa)). Positions 96, 98, and 159 each coordinate Fe cation. Arg169 lines the 2-oxoglutarate pocket.

Fe(2+) serves as cofactor. The cofactor is L-ascorbate.

This is PKHD-type hydroxylase mma_3620 from Janthinobacterium sp. (strain Marseille) (Minibacterium massiliensis).